We begin with the raw amino-acid sequence, 220 residues long: Cytidylate kinase (220 aa).

9 to 17 serves as a coordination point for ATP; sequence GPAASGKST.

It belongs to the cytidylate kinase family. Type 1 subfamily.

The protein localises to the cytoplasm. The catalysed reaction is CMP + ATP = CDP + ADP. It catalyses the reaction dCMP + ATP = dCDP + ADP. The protein is Cytidylate kinase of Thermotoga maritima (strain ATCC 43589 / DSM 3109 / JCM 10099 / NBRC 100826 / MSB8).